We begin with the raw amino-acid sequence, 548 residues long: Aromatic ammonia-lyase (548 aa).

Tyr55 (proton donor/acceptor) is an active-site residue. Positions 144 to 146 form a cross-link, 5-imidazolinone (Ala-Gly); sequence ASG. Residue Ser145 is modified to 2,3-didehydroalanine (Ser). (E)-cinnamate-binding residues include Asn200, Gln288, Arg294, Asn324, Lys396, Glu425, and Asn428.

This sequence belongs to the PAL/histidase family. As to quaternary structure, homotetramer. In terms of processing, contains an active site 4-methylidene-imidazol-5-one (MIO), which is formed autocatalytically by cyclization and dehydration of residues Ala-Ser-Gly.

The enzyme catalyses L-phenylalanine = (E)-cinnamate + NH4(+). The catalysed reaction is L-tyrosine = (E)-4-coumarate + NH4(+). It carries out the reaction 3,4-dimethoxy-L-phenylalanine = 3,4-dimethoxy-(E)-cinnamate + NH4(+). It participates in phenylpropanoid metabolism; trans-cinnamate biosynthesis; trans-cinnamate from L-phenylalanine: step 1/1. Functionally, aromatic ammonia-lyase (AAL) that shows reduced activity to catalyze the non-oxidative ammonia elimination from the canonical AAL substrates L-Phe and L-Tyr, contrasted by its pronounced efficiency towards substrates with electron-donor aromatic substituents such as 3,4-dimethoxy-L-phenylalanine. Is also able to catalyze the reverse reaction in vitro, i.e. the ammonia addition reaction to cinnamate derivatives, producing enantiopure phenylalanine derivatives. Shows no activity with L-His. The protein is Aromatic ammonia-lyase of Loktanella atrilutea.